The chain runs to 157 residues: Endoribonuclease YbeY (157 aa).

H114, H118, and H124 together coordinate Zn(2+).

The protein belongs to the endoribonuclease YbeY family. Zn(2+) serves as cofactor.

It localises to the cytoplasm. Functionally, single strand-specific metallo-endoribonuclease involved in late-stage 70S ribosome quality control and in maturation of the 3' terminus of the 16S rRNA. The sequence is that of Endoribonuclease YbeY from Yersinia pseudotuberculosis serotype O:3 (strain YPIII).